A 248-amino-acid chain; its full sequence is mRNA-decapping protein OPG122 (248 aa).

Positions 45-227 (HKRVSVSAIL…IAKYALDTAK (183 aa)) constitute a Nudix hydrolase domain. The short motif at 126-147 (GIPKRGENVPECLSREIKEEVN) is the Nudix box element. Glutamate 132 provides a ligand contact to Mg(2+). Residue glutamate 141 is the Nucleophile of the active site. Glutamate 145 provides a ligand contact to Mn(2+). Mg(2+) is bound at residue aspartate 167.

This sequence belongs to the Nudix hydrolase family. The cofactor is Mg(2+). Requires Mn(2+) as cofactor.

The protein resides in the host mitochondrion. Functionally, decapping enzyme that remove the protective 5'-cap from both host and viral mRNAs to commit transcripts for decay by the cellular exonuclease XRN1. Preferentially targets spliced mRNAs and since all viral genes are intronless, it preferentially targets host over viral transcripts. Acceleration of the turnover of cellular transcripts promotes the shutoff of host protein synthesis and therefore diminish the magnitude of antiviral response. This is mRNA-decapping protein OPG122 (OPG122) from Vaccinia virus (strain Copenhagen) (VACV).